A 573-amino-acid polypeptide reads, in one-letter code: Sulfite oxidase, mitochondrial (573 aa).

Residues 1–34 (MRLLRPSWAGLLRGRHHQHQRHHRRLLLTTSRGS) constitute a mitochondrion transit peptide. Residues 14-26 (GRHHQHQRHHRRL) show a composition bias toward basic residues. The interval 14-50 (GRHHQHQRHHRRLLLTTSRGSNGEREEQQHSQWSSPG) is disordered. The 79-residue stretch at 108-186 (LPTYRAEEVE…LEGFRIGNLE (79 aa)) folds into the Cytochrome b5 heme-binding domain. Positions 144 and 168 each coordinate heme b. The interval 190 to 199 (VTNVDDELGS) is hinge. The interval 200-423 (PWSQEPQRHA…DSHWQQNDYK (224 aa)) is moco domain. Mo-molybdopterin contacts are provided by residues 240 to 244 (YVRNH), C287, D344, H383, R388, and 399 to 401 (NVK). Positions 424 to 567 (GFSPSTDWDT…RGVLANAYHK (144 aa)) are homodimerization.

Heme b is required as a cofactor. It depends on Mo-molybdopterin as a cofactor. Expressed in the ensheathing glia with relatively weak expression in the CNS cortex (at protein level).

Its subcellular location is the mitochondrion intermembrane space. It carries out the reaction sulfite + O2 + H2O = sulfate + H2O2. Its pathway is energy metabolism; sulfur metabolism. In terms of biological role, required in ensheathing glial cells for normal larval locomotion. Oxidizes sulfite which is required to maintain glutamate homeostasis and as a consequence, neuronal network function. This Drosophila melanogaster (Fruit fly) protein is Sulfite oxidase, mitochondrial.